The sequence spans 495 residues: Glycerol kinase (495 aa).

An ADP-binding site is contributed by T11. Residues T11, T12, and S13 each coordinate ATP. Sn-glycerol 3-phosphate is bound at residue T11. Position 15 (R15) interacts with ADP. Sn-glycerol 3-phosphate is bound by residues R81, E82, Y133, and D242. Positions 81, 82, 133, 242, and 243 each coordinate glycerol. Residues T264 and G307 each coordinate ADP. Residues T264, G307, Q311, and G409 each coordinate ATP. Residues G409 and N413 each coordinate ADP.

Belongs to the FGGY kinase family.

The enzyme catalyses glycerol + ATP = sn-glycerol 3-phosphate + ADP + H(+). It participates in polyol metabolism; glycerol degradation via glycerol kinase pathway; sn-glycerol 3-phosphate from glycerol: step 1/1. With respect to regulation, inhibited by fructose 1,6-bisphosphate (FBP). In terms of biological role, key enzyme in the regulation of glycerol uptake and metabolism. Catalyzes the phosphorylation of glycerol to yield sn-glycerol 3-phosphate. This is Glycerol kinase from Borrelia hermsii (strain HS1 / DAH).